A 471-amino-acid chain; its full sequence is 3-isopropylmalate dehydratase large subunit (471 aa).

Positions 347, 407, and 410 each coordinate [4Fe-4S] cluster.

The protein belongs to the aconitase/IPM isomerase family. LeuC type 1 subfamily. As to quaternary structure, heterodimer of LeuC and LeuD. It depends on [4Fe-4S] cluster as a cofactor.

It catalyses the reaction (2R,3S)-3-isopropylmalate = (2S)-2-isopropylmalate. Its pathway is amino-acid biosynthesis; L-leucine biosynthesis; L-leucine from 3-methyl-2-oxobutanoate: step 2/4. Catalyzes the isomerization between 2-isopropylmalate and 3-isopropylmalate, via the formation of 2-isopropylmaleate. The chain is 3-isopropylmalate dehydratase large subunit from Geobacillus kaustophilus (strain HTA426).